The following is a 153-amino-acid chain: Ribosome maturation factor RimP (153 aa).

The protein belongs to the RimP family.

Its subcellular location is the cytoplasm. Required for maturation of 30S ribosomal subunits. This Clostridium botulinum (strain Okra / Type B1) protein is Ribosome maturation factor RimP.